Reading from the N-terminus, the 275-residue chain is uncharacterized protein (275 aa).

An NADPH-binding site is contributed by aspartate 45. Residues tyrosine 50 and histidine 111 each act as proton donor in the active site. The NADPH site is built by serine 139, glutamine 162, leucine 191, lysine 196, serine 232, serine 233, and arginine 237.

This sequence belongs to the aldo/keto reductase family.

The protein localises to the cytoplasm. Its subcellular location is the nucleus. This is an uncharacterized protein from Schizosaccharomyces pombe (strain 972 / ATCC 24843) (Fission yeast).